The following is a 380-amino-acid chain: Chaperone protein DnaJ (380 aa).

Residues 5 to 69 form the J domain; it reads DYYEILGVSK…QKRAHYDQFG (65 aa). The CR-type zinc-finger motif lies at 135–217; the sequence is GKETDIEIPR…CGGTGRVKRR (83 aa). 8 residues coordinate Zn(2+): cysteine 148, cysteine 151, cysteine 165, cysteine 168, cysteine 191, cysteine 194, cysteine 205, and cysteine 208. CXXCXGXG motif repeat units lie at residues 148–155, 165–172, 191–198, and 205–212; these read CNTCHGTG, CSYCHGTG, CPYCGGTG, and CTTCGGTG.

This sequence belongs to the DnaJ family. In terms of assembly, homodimer. The cofactor is Zn(2+).

It is found in the cytoplasm. Its function is as follows. Participates actively in the response to hyperosmotic and heat shock by preventing the aggregation of stress-denatured proteins and by disaggregating proteins, also in an autonomous, DnaK-independent fashion. Unfolded proteins bind initially to DnaJ; upon interaction with the DnaJ-bound protein, DnaK hydrolyzes its bound ATP, resulting in the formation of a stable complex. GrpE releases ADP from DnaK; ATP binding to DnaK triggers the release of the substrate protein, thus completing the reaction cycle. Several rounds of ATP-dependent interactions between DnaJ, DnaK and GrpE are required for fully efficient folding. Also involved, together with DnaK and GrpE, in the DNA replication of plasmids through activation of initiation proteins. The chain is Chaperone protein DnaJ from Parageobacillus thermoglucosidasius (Geobacillus thermoglucosidasius).